The chain runs to 78 residues: Large ribosomal subunit protein bL28 (78 aa).

Belongs to the bacterial ribosomal protein bL28 family.

In Escherichia coli O139:H28 (strain E24377A / ETEC), this protein is Large ribosomal subunit protein bL28.